A 530-amino-acid chain; its full sequence is Bifunctional purine biosynthesis protein PurH (530 aa).

The region spanning 1–148 (MEQARPIRRA…KNHKDVAIVV (148 aa)) is the MGS-like domain.

Belongs to the PurH family.

The catalysed reaction is (6R)-10-formyltetrahydrofolate + 5-amino-1-(5-phospho-beta-D-ribosyl)imidazole-4-carboxamide = 5-formamido-1-(5-phospho-D-ribosyl)imidazole-4-carboxamide + (6S)-5,6,7,8-tetrahydrofolate. It carries out the reaction IMP + H2O = 5-formamido-1-(5-phospho-D-ribosyl)imidazole-4-carboxamide. It participates in purine metabolism; IMP biosynthesis via de novo pathway; 5-formamido-1-(5-phospho-D-ribosyl)imidazole-4-carboxamide from 5-amino-1-(5-phospho-D-ribosyl)imidazole-4-carboxamide (10-formyl THF route): step 1/1. Its pathway is purine metabolism; IMP biosynthesis via de novo pathway; IMP from 5-formamido-1-(5-phospho-D-ribosyl)imidazole-4-carboxamide: step 1/1. This Aeromonas hydrophila subsp. hydrophila (strain ATCC 7966 / DSM 30187 / BCRC 13018 / CCUG 14551 / JCM 1027 / KCTC 2358 / NCIMB 9240 / NCTC 8049) protein is Bifunctional purine biosynthesis protein PurH.